We begin with the raw amino-acid sequence, 390 residues long: Succinate--CoA ligase [ADP-forming] subunit beta (390 aa).

An ATP-grasp domain is found at Lys-9–Glu-244. ATP is bound by residues Lys-46, Gly-53–Gly-55, Glu-99, Ala-102, and Glu-107. Mg(2+) contacts are provided by Asn-199 and Asp-213. Substrate is bound by residues Asn-264 and Gly-321–Val-323.

The protein belongs to the succinate/malate CoA ligase beta subunit family. Heterotetramer of two alpha and two beta subunits. It depends on Mg(2+) as a cofactor.

The catalysed reaction is succinate + ATP + CoA = succinyl-CoA + ADP + phosphate. It catalyses the reaction GTP + succinate + CoA = succinyl-CoA + GDP + phosphate. It functions in the pathway carbohydrate metabolism; tricarboxylic acid cycle; succinate from succinyl-CoA (ligase route): step 1/1. Its function is as follows. Succinyl-CoA synthetase functions in the citric acid cycle (TCA), coupling the hydrolysis of succinyl-CoA to the synthesis of either ATP or GTP and thus represents the only step of substrate-level phosphorylation in the TCA. The beta subunit provides nucleotide specificity of the enzyme and binds the substrate succinate, while the binding sites for coenzyme A and phosphate are found in the alpha subunit. This chain is Succinate--CoA ligase [ADP-forming] subunit beta, found in Nitratiruptor sp. (strain SB155-2).